Here is a 129-residue protein sequence, read N- to C-terminus: Putative F-box protein At3g42722 (129 aa).

Positions 4–50 (MASIDCLPDELLVGILSFILTNEAASTSILSKRWRTLFAFSHNLDCN) constitute an F-box domain.

This chain is Putative F-box protein At3g42722, found in Arabidopsis thaliana (Mouse-ear cress).